We begin with the raw amino-acid sequence, 172 residues long: 3-phenylpropionate/cinnamic acid dioxygenase subunit beta (172 aa).

The protein belongs to the bacterial ring-hydroxylating dioxygenase beta subunit family. In terms of assembly, this dioxygenase system consists of four proteins: the two subunits of the hydroxylase component (HcaE and HcaF), a ferredoxin (HcaC) and a ferredoxin reductase (HcaD).

The catalysed reaction is 3-phenylpropanoate + NADH + O2 + H(+) = 3-(cis-5,6-dihydroxycyclohexa-1,3-dien-1-yl)propanoate + NAD(+). It catalyses the reaction (E)-cinnamate + NADH + O2 + H(+) = (2E)-3-(cis-5,6-dihydroxycyclohexa-1,3-dien-1-yl)prop-2-enoate + NAD(+). It participates in aromatic compound metabolism; 3-phenylpropanoate degradation. Functionally, part of the multicomponent 3-phenylpropionate dioxygenase. Converts 3-phenylpropionic acid (PP) and cinnamic acid (CI) into 3-phenylpropionate-dihydrodiol (PP-dihydrodiol) and cinnamic acid-dihydrodiol (CI-dihydrodiol), respectively. The polypeptide is 3-phenylpropionate/cinnamic acid dioxygenase subunit beta (Escherichia coli O139:H28 (strain E24377A / ETEC)).